The following is a 210-amino-acid chain: Small ribosomal subunit protein uS5 (210 aa).

A compositionally biased stretch (basic and acidic residues) spans 1 to 23 (MARTPSSDRPERGRGGERGDRPN). The tract at residues 1-40 (MARTPSSDRPERGRGGERGDRPNRGRGGAEQTPREREESE) is disordered. The region spanning 41–104 (FVDKLVHINR…EQAKRNMIKI (64 aa)) is the S5 DRBM domain.

It belongs to the universal ribosomal protein uS5 family. As to quaternary structure, part of the 30S ribosomal subunit. Contacts proteins S4 and S8.

Functionally, with S4 and S12 plays an important role in translational accuracy. In terms of biological role, located at the back of the 30S subunit body where it stabilizes the conformation of the head with respect to the body. The sequence is that of Small ribosomal subunit protein uS5 from Paramagnetospirillum magneticum (strain ATCC 700264 / AMB-1) (Magnetospirillum magneticum).